The following is an 806-amino-acid chain: Transitional endoplasmic reticulum ATPase (806 aa).

N-acetylalanine is present on alanine 2. Serine 3 and serine 7 each carry phosphoserine. Lysine 8 is covalently cross-linked (Glycyl lysine isopeptide (Lys-Gly) (interchain with G-Cter in SUMO2)). Serine 13 is subject to Phosphoserine. Lysine 18 is covalently cross-linked (Glycyl lysine isopeptide (Lys-Gly) (interchain with G-Cter in SUMO2)). Residue serine 37 is modified to Phosphoserine. Position 247–253 (247–253 (PGTGKTL)) interacts with ATP. The residue at position 315 (lysine 315) is an N6,N6,N6-trimethyllysine; by VCPKMT. Asparagine 348 and histidine 384 together coordinate ATP. Threonine 436 is subject to Phosphothreonine. Phosphoserine is present on serine 462. Lysine 502 and lysine 505 each carry N6-acetyllysine. 521–526 (GCGKTL) serves as a coordination point for ATP. Lysine 668 carries the N6-acetyllysine; alternate modification. Lysine 668 is subject to N6-succinyllysine; alternate. Serine 702 carries the phosphoserine modification. The segment at 708–727 (RRERERQTNPSAMEVEEDDP) is disordered. The residue at position 754 (lysine 754) is an N6-acetyllysine. Residues 768 to 806 (FGSFRFPSGNQGGAGPSQGSGGGTGGNVYTEDNDDDLYG) form a disordered region. A phosphoserine mark is found at serine 770, serine 775, and serine 787. Residues 777–793 (NQGGAGPSQGSGGGTGG) show a composition bias toward gly residues. The interval 797–806 (TEDNDDDLYG) is interaction with UBXN6. The PIM motif motif lies at 802 to 806 (DDLYG). Residue tyrosine 805 is modified to Phosphotyrosine.

This sequence belongs to the AAA ATPase family. In terms of assembly, homohexamer. Forms a ring-shaped particle of 12.5 nm diameter, that displays 6-fold radial symmetry. Interacts with NSFL1C-like protein p37; the complex has membrane fusion activity and is required for Golgi and endoplasmic reticulum biogenesis. Interacts with RHBDD1 (via C-terminal domain). Interacts with SELENOS and SYVN1, as well as with DERL1 (via SHP-box motif), DERL2 and DERL3; which probably transfer misfolded proteins from the ER to VCP. Interacts with SVIP and DERL1. Component of a complex required to couple retrotranslocation, ubiquitination and deglycosylation composed of NGLY1, SAKS1, AMFR, VCP and RAD23B. Part of a complex composed of STUB1/CHIP, VCP/p97, CHRNA3, and UBXN2A that modulates the ubiquitination and endoplasmic reticulum-associated degradation (ERAD) of CHRNA3. Within the complex UBXN2A acts as a scaffold protein required for the interaction of CHRNA3 with VCP/p97, this interaction also inhibits CHRNA3 ubiquitination by STUB1/CHIP and subsequently ERAD. Interacts with UBXN2A (via UBX domain); the interaction is required for the interaction of CHRNA3 in the STUB1-VCP-UBXN2A complex. Directly interacts with UBXN4 and RNF19A. Interacts with CASR. Interacts with UBE4B and YOD1. Interacts with clathrin. Interacts with RNF103. Interacts with TRIM13 and TRIM21. Component of a VCP/p97-AMFR/gp78 complex that participates in the final step of the endoplasmic reticulum-associated degradation (ERAD) of HMGCR. Interacts directly with AMFR/gp78 (via its VIM). Interacts with SPRTN; leading to recruitment to stalled replication forks. Part of a ternary complex containing STX5A, NSFL1C and VCP. NSFL1C forms a homotrimer that binds to one end of a VCP homohexamer. The complex binds to membranes enriched in phosphatidylethanolamine-containing lipids and promotes Golgi membrane fusion. Binds to a heterodimer of NPLOC4 and UFD1, binding to this heterodimer inhibits Golgi-membrane fusion. Interaction with VCIP135 leads to dissociation of the complex via ATP hydrolysis by VCP. Part of a ternary complex containing NPLOC4, UFD1 and VCP. Interacts with WASHC5. Interacts with UBOX5. Interacts (via N-terminus) with UBXN7, UBXN8, and probably several other UBX domain-containing proteins (via UBX domains); the interactions are mutually exclusive with VIM-dependent interactions such as those with AMFR and SELENOS. Forms a complex with UBQLN1 and UBXN4. Interacts (via the PIM motif) with RNF31 (via the PUB domain). Interacts with RIGI and RNF125; interaction takes place when RIGI is ubiquitinated via 'Lys-63'-linked ubiquitin on its CARD domains, leading to recruit RNF125 and promote ubiquitination and degradation of RIGI. Interacts with BAG6. Interacts with UBXN10. Interacts with UBXN6; the interaction with UBXN6 is direct and competitive with UFD1. Forms a ternary complex with CAV1 and UBXN6. Interacts with PLAA, UBXN6 and YOD1; may form a complex involved in macroautophagy. Interacts with ANKZF1. Interacts with ubiquitin-binding protein FAF1. Interacts with ZFAND2B (via VIM motif); the interaction is direct. Interacts with ZFAND1 (via its ubiquitin-like region); this interaction occurs in an arsenite-dependent manner. Interacts with CCDC47. Interacts with LMBR1L and UBAC2. Interacts with ATXN3. Interacts with TEX264; bridging VCP to covalent DNA-protein cross-links (DPCs). Phosphorylated by tyrosine kinases in response to T-cell antigen receptor activation. Phosphorylated in mitotic cells. In terms of processing, ISGylated. Post-translationally, methylation at Lys-315 catalyzed by VCPKMT is increased in the presence of ASPSCR1. Lys-315 methylation may decrease ATPase activity.

It localises to the cytoplasm. The protein localises to the cytosol. It is found in the endoplasmic reticulum. Its subcellular location is the nucleus. The protein resides in the stress granule. It carries out the reaction ATP + H2O = ADP + phosphate + H(+). In terms of biological role, necessary for the fragmentation of Golgi stacks during mitosis and for their reassembly after mitosis. Involved in the formation of the transitional endoplasmic reticulum (tER). The transfer of membranes from the endoplasmic reticulum to the Golgi apparatus occurs via 50-70 nm transition vesicles which derive from part-rough, part-smooth transitional elements of the endoplasmic reticulum (tER). Vesicle budding from the tER is an ATP-dependent process. The ternary complex containing UFD1, VCP and NPLOC4 binds ubiquitinated proteins and is necessary for the export of misfolded proteins from the ER to the cytoplasm, where they are degraded by the proteasome. The NPLOC4-UFD1-VCP complex regulates spindle disassembly at the end of mitosis and is necessary for the formation of a closed nuclear envelope. Regulates E3 ubiquitin-protein ligase activity of RNF19A. Component of the VCP/p97-AMFR/gp78 complex that participates in the final step of the sterol-mediated ubiquitination and endoplasmic reticulum-associated degradation (ERAD) of HMGCR. Mediates the endoplasmic reticulum-associated degradation of CHRNA3 in cortical neurons as part of the STUB1-VCP-UBXN2A complex. Involved in endoplasmic reticulum stress-induced pre-emptive quality control, a mechanism that selectively attenuates the translocation of newly synthesized proteins into the endoplasmic reticulum and reroutes them to the cytosol for proteasomal degradation. Involved in clearance process by mediating G3BP1 extraction from stress granules. Also involved in DNA damage response: recruited to double-strand breaks (DSBs) sites in a RNF8- and RNF168-dependent manner and promotes the recruitment of TP53BP1 at DNA damage sites. Recruited to stalled replication forks by SPRTN: may act by mediating extraction of DNA polymerase eta (POLH) to prevent excessive translesion DNA synthesis and limit the incidence of mutations induced by DNA damage. Together with SPRTN metalloprotease, involved in the repair of covalent DNA-protein cross-links (DPCs) during DNA synthesis. Involved in interstrand cross-link repair in response to replication stress by mediating unloading of the ubiquitinated CMG helicase complex. Mediates extraction of PARP1 trapped to chromatin: recognizes and binds ubiquitinated PARP1 and promotes its removal. Required for cytoplasmic retrotranslocation of stressed/damaged mitochondrial outer-membrane proteins and their subsequent proteasomal degradation. Essential for the maturation of ubiquitin-containing autophagosomes and the clearance of ubiquitinated protein by autophagy. Acts as a negative regulator of type I interferon production by interacting with RIGI: interaction takes place when RIGI is ubiquitinated via 'Lys-63'-linked ubiquitin on its CARD domains, leading to recruit RNF125 and promote ubiquitination and degradation of RIGI. May play a role in the ubiquitin-dependent sorting of membrane proteins to lysosomes where they undergo degradation. May more particularly play a role in caveolins sorting in cells. By controlling the steady-state expression of the IGF1R receptor, indirectly regulates the insulin-like growth factor receptor signaling pathway. This is Transitional endoplasmic reticulum ATPase (Vcp) from Rattus norvegicus (Rat).